A 277-amino-acid chain; its full sequence is Carbonyl reductase [NADPH] 1 (277 aa).

S2 carries the post-translational modification N-acetylserine. Phosphoserine is present on residues S2 and S30. NADP(+)-binding positions include 10 to 34 (VTGA…GDVV), 63 to 64 (DI), and N90. Residues 95-97 (FKV) and Q106 each bind glutathione. S140 is a substrate binding site. A glutathione-binding site is contributed by 193–194 (AY). Y194 serves as the catalytic Proton acceptor. Residues 194–198 (YGVTK) and 231–233 (VRT) each bind NADP(+). An N6-1-carboxyethyl lysine modification is found at K239. The disordered stretch occupies residues 258–277 (PPDAEGPHGQFVQDKKVEPW).

Belongs to the short-chain dehydrogenases/reductases (SDR) family. Monomer.

It localises to the cytoplasm. It catalyses the reaction a secondary alcohol + NADP(+) = a ketone + NADPH + H(+). The enzyme catalyses prostaglandin F2alpha + NADP(+) = prostaglandin E2 + NADPH + H(+). The catalysed reaction is prostaglandin E1 + NADP(+) = 15-oxoprostaglandin E1 + NADPH + H(+). It carries out the reaction menadione + NADPH + H(+) = menadiol + NADP(+). It catalyses the reaction prostaglandin D2 + NADP(+) = 15-oxoprostaglandin D2 + NADPH + H(+). The enzyme catalyses prostaglandin E2 + NADP(+) = 15-oxoprostaglandin E2 + NADPH + H(+). The catalysed reaction is prostaglandin F2alpha + NADP(+) = 15-oxoprostaglandin F2alpha + NADPH + H(+). It carries out the reaction daunorubicin + NADPH + H(+) = 13-dihydrodaunorubicin + NADP(+). It catalyses the reaction S-nitrosoglutathione + NADPH + H(+) = S-(hydroxysulfenamide)glutathione + NADP(+). The enzyme catalyses corticosterone + NADPH + H(+) = 20beta-dihydrocorticosterone + NADP(+). The catalysed reaction is a primary alcohol + NADP(+) = an aldehyde + NADPH + H(+). It carries out the reaction cortisol + NADPH + H(+) = 20beta-dihydrocortisol + NADP(+). NADPH-dependent reductase with broad substrate specificity. Catalyzes the reduction of a wide variety of carbonyl compounds including quinones, prostaglandins, menadione, plus various xenobiotics. Catalyzes the reduction of the antitumor anthracyclines doxorubicin and daunorubicin to the cardiotoxic compounds doxorubicinol and daunorubicinol. Can convert prostaglandin E to prostaglandin F2-alpha. Can bind glutathione, which explains its higher affinity for glutathione-conjugated substrates. Catalyzes the reduction of S-nitrosoglutathione. In addition, participates in the glucocorticoid metabolism by catalyzing the NADPH-dependent cortisol/corticosterone into 20beta-dihydrocortisol (20b-DHF) or 20beta-corticosterone (20b-DHB), which are weak agonists of NR3C1 and NR3C2 in adipose tissue. This chain is Carbonyl reductase [NADPH] 1, found in Mus musculus (Mouse).